Here is a 164-residue protein sequence, read N- to C-terminus: Cytochrome c-type biogenesis protein CcmE (164 aa).

Residues 1-8 (MNPRRKSR) are Cytoplasmic-facing. The chain crosses the membrane as a helical; Signal-anchor for type II membrane protein span at residues 9 to 29 (LYLAMVVLIGISLTTTLVLYA). The Periplasmic segment spans residues 30–164 (LRSNIDLFYT…RGTNTTGNAL (135 aa)). Residues His-130 and Tyr-134 each contribute to the heme site. The interval 140–164 (EEAMKENHSRPAAAYRGTNTTGNAL) is disordered.

Belongs to the CcmE/CycJ family.

It is found in the cell inner membrane. Functionally, heme chaperone required for the biogenesis of c-type cytochromes. Transiently binds heme delivered by CcmC and transfers the heme to apo-cytochromes in a process facilitated by CcmF and CcmH. The polypeptide is Cytochrome c-type biogenesis protein CcmE (Yersinia pseudotuberculosis serotype O:3 (strain YPIII)).